The sequence spans 147 residues: Pathogenesis-related protein PR-4B (147 aa).

The N-terminal stretch at 1–25 (MERVNNYKLCVALLIMSVMMAMAAA) is a signal peptide. The region spanning 26–147 (QSATNVRSTY…VNYEFVNCND (122 aa)) is the Barwin domain. 3 disulfide bridges follow: C54/C86, C75/C109, and C89/C145.

The protein resides in the secreted. The protein localises to the cell wall. The protein is Pathogenesis-related protein PR-4B of Nicotiana tabacum (Common tobacco).